The sequence spans 330 residues: D-cysteine desulfhydrase (330 aa).

K52 bears the N6-(pyridoxal phosphate)lysine mark.

The protein belongs to the ACC deaminase/D-cysteine desulfhydrase family. As to quaternary structure, homodimer. Pyridoxal 5'-phosphate serves as cofactor.

The catalysed reaction is D-cysteine + H2O = hydrogen sulfide + pyruvate + NH4(+) + H(+). Catalyzes the alpha,beta-elimination reaction of D-cysteine and of several D-cysteine derivatives. It could be a defense mechanism against D-cysteine. The sequence is that of D-cysteine desulfhydrase from Yersinia enterocolitica serotype O:8 / biotype 1B (strain NCTC 13174 / 8081).